The following is a 149-amino-acid chain: Secreted RxLR effector protein 3 (149 aa).

Residues 1–23 (MRASTILFVLGAAILAVIGVTTA) form the signal peptide. Positions 38 to 53 (RLLRSGSMEQEPDEER) match the RxLR-dEER motif.

Belongs to the RxLR effector family.

The protein resides in the secreted. It is found in the host nucleus. The protein localises to the host cytoplasm. Secreted effector that completely suppresses the host cell death induced by cell death-inducing proteins. This chain is Secreted RxLR effector protein 3, found in Plasmopara viticola (Downy mildew of grapevine).